We begin with the raw amino-acid sequence, 286 residues long: MSKLTSIEENIEIKRRLWNGSISLKIIISIVGESSEDGITNEYEYLTEGYRNAYLPTLYPNIVSYIKKLPTVAFSNNSPIWLEYEGVPLRWNLPIGVLYDHLYLPAKFTNQSTPWTLDLKIASSTLPYPSNYIVPFTYSAEDGSVNYTKSINEMLLNQLKQSCYVLNGTAKPIMQLNGPETELLCNLVITRNLKTYNFFNNKIIKQIRGIPVRIYLPNTQLVAQAAVDPHILLQDLLLERIPTLMEVSVPIIHGIDAGPLLKFQLNDIWHQFKHPDNVLYISILMP.

Residue lysine 160 forms a Glycyl lysine isopeptide (Lys-Gly) (interchain with G-Cter in ATG12) linkage.

It belongs to the ATG5 family. In terms of assembly, conjugated with ATG12. In terms of processing, conjugated to ATG12; which is essential for autophagy.

Its subcellular location is the preautophagosomal structure membrane. Involved in cytoplasm to vacuole transport (Cvt) and autophagic vesicle formation. Autophagy is essential for maintenance of amino acid levels and protein synthesis under nitrogen starvation. Required for selective autophagic degradation of the nucleus (nucleophagy). Also required for mitophagy, which eliminates defective or superfluous mitochondria in order to fulfill cellular energy requirements and prevent excess ROS production. Conjugation with ATG12, through a ubiquitin-like conjugating system involving ATG7 as an E1-like activating enzyme and ATG10 as an E2-like conjugating enzyme, is essential for its function. The ATG12-ATG5 conjugate acts as an E3-like enzyme which is required for lipidation of ATG8 and ATG8 association to the vesicle membranes. This chain is Autophagy protein 5 (ATG5), found in Lodderomyces elongisporus (strain ATCC 11503 / CBS 2605 / JCM 1781 / NBRC 1676 / NRRL YB-4239) (Yeast).